The primary structure comprises 2446 residues: Transcription factor HIVEP2 (2446 aa).

The disordered stretch occupies residues 1 to 93 (MDTGDTALGQ…YPPHRPSPYS (93 aa)). Positions 17–28 (GETDKASGRWRQ) are enriched in basic and acidic residues. C2H2-type zinc fingers lie at residues 189-211 (YICP…IRSH) and 217-239 (YPCI…RKSH). Disordered stretches follow at residues 272 to 303 (HSDG…PIPL), 340 to 416 (ESSQ…PPNT), 543 to 563 (SNSV…LRGS), and 751 to 985 (SHGH…SFER). Polar residues-rich tracts occupy residues 381-416 (SEPS…PPNT) and 543-556 (SNSV…NLTI). Over residues 751–760 (SHGHTERFDP) the composition is skewed to basic and acidic residues. Positions 766 to 777 (QPGSPSLVSEES) are enriched in polar residues. Basic and acidic residues predominate over residues 782–791 (DSDKMSDLGG). A compositionally biased stretch (polar residues) spans 800 to 812 (SVIQHTNSLSRPN). The residue at position 819 (Ser819) is a Phosphoserine. The segment covering 863–878 (PSPSQQVQQQSYHTQP) has biased composition (low complexity). Basic and acidic residues predominate over residues 892–916 (RVTEEPDKPEKEKEAQSKEPEKPVE). The Nuclear localization signal motif lies at 937 to 943 (PKKKRLR). 5 positions are modified to phosphoserine: Ser950, Ser955, Ser1048, Ser1443, and Ser1447. A compositionally biased stretch (low complexity) spans 952–982 (GESSFESTGTGLSRSPSQESNLSHSSSFSMS). The interval 1485-1603 (KDLSRPQKPQ…LEEEGKGHKR (119 aa)) is disordered. 2 stretches are compositionally biased toward low complexity: residues 1510 to 1533 (SGSS…SPSS) and 1576 to 1586 (SDMSMSPQSSS). 2 consecutive C2H2-type zinc fingers follow at residues 1799 to 1821 (YICE…IRTH) and 1827 to 1851 (YVCK…SKAH). Disordered regions lie at residues 1882-1951 (AAEK…VNVG) and 2024-2129 (EECM…RRDL). The span at 1899–1925 (DAEESDGEDGDDNDDDDEDEDDFDDQG) shows a compositional bias: acidic residues. Residues 2029-2053 (PSEPSSSPRDFSPSSHHSSPGYDSS) are compositionally biased toward low complexity. 10 consecutive repeat copies span residues 2053–2056 (SPCR), 2059–2062 (SPKR), 2071–2074 (SPRR), 2083–2086 (SPMR), 2089–2092 (SPRK), 2106–2109 (SPRR), 2112–2115 (SPRR), 2118–2121 (SPGK), 2130–2133 (SPRR), and 2145–2148 (SPRR). The tract at residues 2053–2148 (SPCRDNSPKR…TTIRAPSPRR (96 aa)) is 10 X 4 AA tandem repeats of S-P-[RGMKC]-[RK]. Basic and acidic residues predominate over residues 2078–2107 (PRRDLSPMRHLSPRKEAALRREMSQRDVSP). Ser2118 carries the post-translational modification Phosphoserine. Disordered stretches follow at residues 2242 to 2325 (PALS…QEEN), 2371 to 2403 (HFSR…SQTP), and 2423 to 2446 (HSSK…SQLH). A phosphoserine mark is found at Ser2297 and Ser2301. The segment covering 2307 to 2317 (KQSTSEDSLNA) has biased composition (polar residues). Basic and acidic residues predominate over residues 2387–2396 (PDLHDGEKDN). Phosphoserine is present on residues Ser2429 and Ser2431. The segment covering 2433 to 2446 (EESKDPSSEKSQLH) has biased composition (basic and acidic residues).

As to quaternary structure, interacts with TCF4. Expressed in brain and skeletal muscle.

It localises to the nucleus. In terms of biological role, this protein specifically binds to the DNA sequence 5'-GGGACTTTCC-3' which is found in the enhancer elements of numerous viral promoters such as those of SV40, CMV, or HIV1. In addition, related sequences are found in the enhancer elements of a number of cellular promoters, including those of the class I MHC, interleukin-2 receptor, somatostatin receptor II, and interferon-beta genes. It may act in T-cell activation. This Homo sapiens (Human) protein is Transcription factor HIVEP2 (HIVEP2).